Reading from the N-terminus, the 183-residue chain is Putative ribosomal N-acetyltransferase YdaF (183 aa).

The N-acetyltransferase domain maps to 10–176 (ITIRLLEPKD…HDLVYYSLLK (167 aa)).

Belongs to the acetyltransferase family. In terms of assembly, homohexamer, and homodimer.

In terms of biological role, putative N-acetyltransferase. May act on ribosomal proteins (Potential). This chain is Putative ribosomal N-acetyltransferase YdaF (ydaF), found in Bacillus subtilis (strain 168).